The following is an 828-amino-acid chain: Periplasmic nitrate reductase (828 aa).

A signal peptide (tat-type signal) is located at residues 1–31 (MKLSRRSFMKANAVAAAAAAAGLSVPGVARA). Residues 39–95 (IKWDKAPCRFCGTGCGVLVGTQQGRVVACQGDPDAPVNRGLNCIKGYFLPKIMYGKD) enclose the 4Fe-4S Mo/W bis-MGD-type domain. The [4Fe-4S] cluster site is built by Cys46, Cys49, Cys53, and Cys81. Mo-bis(molybdopterin guanine dinucleotide) is bound by residues Lys83, Gln150, Asn175, Cys179, 212–219 (WGANMAEM), 243–247 (STYQH), 262–264 (QSD), Met372, Gln376, Asn482, 508–509 (SD), Lys531, Asp558, and 718–727 (TGRVLEHWHT). Phe794 lines the substrate pocket. Mo-bis(molybdopterin guanine dinucleotide) is bound by residues Asn802 and Lys819.

This sequence belongs to the prokaryotic molybdopterin-containing oxidoreductase family. NasA/NapA/NarB subfamily. In terms of assembly, component of the periplasmic nitrate reductase NapAB complex composed of NapA and NapB. Requires [4Fe-4S] cluster as cofactor. The cofactor is Mo-bis(molybdopterin guanine dinucleotide). Post-translationally, predicted to be exported by the Tat system. The position of the signal peptide cleavage has not been experimentally proven.

It is found in the periplasm. It carries out the reaction 2 Fe(II)-[cytochrome] + nitrate + 2 H(+) = 2 Fe(III)-[cytochrome] + nitrite + H2O. Functionally, catalytic subunit of the periplasmic nitrate reductase complex NapAB. Receives electrons from NapB and catalyzes the reduction of nitrate to nitrite. This is Periplasmic nitrate reductase from Escherichia coli O6:K15:H31 (strain 536 / UPEC).